The primary structure comprises 261 residues: Cytochrome c oxidase subunit 3 (261 aa).

The Mitochondrial matrix segment spans residues 1 to 15; that stretch reads MTHQTHAYHMVNPSP. Residues 16–34 traverse the membrane as a helical segment; it reads WPLTGALSALLMTSGLIMW. The Mitochondrial intermembrane portion of the chain corresponds to 35–40; it reads FHFNST. Residues 41-66 traverse the membrane as a helical segment; it reads ALLMLGLTTNMLTMYQWWRDIIREST. Residues 67–72 are Mitochondrial matrix-facing; it reads FQGHHT. The helical transmembrane segment at 73 to 105 threads the bilayer; it reads PVVQKGLRYGMILFIISEVLFFTGFFWAFYHSS. At 106–128 the chain is on the mitochondrial intermembrane side; it reads LAPTPELGGCWPPTGINPLNPLE. The chain crosses the membrane as a helical span at residues 129–152; sequence VPLLNTSVLLASGVSITWAHHSLM. The Mitochondrial matrix portion of the chain corresponds to 153–155; it reads EGN. The chain crosses the membrane as a helical span at residues 156–183; it reads RSHMLQALFITITLGVYFTLLQASEYYE. At 184-190 the chain is on the mitochondrial intermembrane side; it reads APFTISD. The chain crosses the membrane as a helical span at residues 191–223; the sequence is GVYGSTFFVATGFHGLHVIIGSTFLIVCFFRQL. Topologically, residues 224 to 232 are mitochondrial matrix; that stretch reads KFHFTSNHH. The chain crosses the membrane as a helical span at residues 233–256; that stretch reads FGFEAAAWYWHFVDVVWLFLYVSI. At 257-261 the chain is on the mitochondrial intermembrane side; the sequence is YWWGS.

This sequence belongs to the cytochrome c oxidase subunit 3 family. As to quaternary structure, component of the cytochrome c oxidase (complex IV, CIV), a multisubunit enzyme composed of 14 subunits. The complex is composed of a catalytic core of 3 subunits MT-CO1, MT-CO2 and MT-CO3, encoded in the mitochondrial DNA, and 11 supernumerary subunits COX4I, COX5A, COX5B, COX6A, COX6B, COX6C, COX7A, COX7B, COX7C, COX8 and NDUFA4, which are encoded in the nuclear genome. The complex exists as a monomer or a dimer and forms supercomplexes (SCs) in the inner mitochondrial membrane with NADH-ubiquinone oxidoreductase (complex I, CI) and ubiquinol-cytochrome c oxidoreductase (cytochrome b-c1 complex, complex III, CIII), resulting in different assemblies (supercomplex SCI(1)III(2)IV(1) and megacomplex MCI(2)III(2)IV(2)).

It is found in the mitochondrion inner membrane. It catalyses the reaction 4 Fe(II)-[cytochrome c] + O2 + 8 H(+)(in) = 4 Fe(III)-[cytochrome c] + 2 H2O + 4 H(+)(out). Its function is as follows. Component of the cytochrome c oxidase, the last enzyme in the mitochondrial electron transport chain which drives oxidative phosphorylation. The respiratory chain contains 3 multisubunit complexes succinate dehydrogenase (complex II, CII), ubiquinol-cytochrome c oxidoreductase (cytochrome b-c1 complex, complex III, CIII) and cytochrome c oxidase (complex IV, CIV), that cooperate to transfer electrons derived from NADH and succinate to molecular oxygen, creating an electrochemical gradient over the inner membrane that drives transmembrane transport and the ATP synthase. Cytochrome c oxidase is the component of the respiratory chain that catalyzes the reduction of oxygen to water. Electrons originating from reduced cytochrome c in the intermembrane space (IMS) are transferred via the dinuclear copper A center (CU(A)) of subunit 2 and heme A of subunit 1 to the active site in subunit 1, a binuclear center (BNC) formed by heme A3 and copper B (CU(B)). The BNC reduces molecular oxygen to 2 water molecules using 4 electrons from cytochrome c in the IMS and 4 protons from the mitochondrial matrix. The chain is Cytochrome c oxidase subunit 3 (MT-CO3) from Syncerus caffer (African buffalo).